The chain runs to 713 residues: Signal transducer and activator of transcription 1 (713 aa).

In terms of domain architecture, SH2 spans 477–574 (WCIGFISKHD…EEMLRYFESE (98 aa)).

The protein belongs to the transcription factor STAT family. In terms of assembly, forms a homodimer or a heterodimer with a related family member.

The protein localises to the cytoplasm. Its subcellular location is the nucleus. Carries out a dual function: signal transduction and activation of transcription. Activated STAT proteins play a role in repression of dauer formation. Neuronal expression is held in check by negative signals through the TGF-beta pathway that target the daf-3 transcription factor. The polypeptide is Signal transducer and activator of transcription 1 (Caenorhabditis briggsae).